A 239-amino-acid polypeptide reads, in one-letter code: Lytic polysaccharide monooxygenase-like protein X325 (239 aa).

An N-terminal signal peptide occupies residues 1 to 24; sequence MVLPSSVSQWAALIALLCAGLANA. His-25 contacts Cu(2+). N-linked (GlcNAc...) asparagine glycans are attached at residues Asn-41, Asn-56, Asn-79, Asn-117, Asn-150, and Asn-197. Cystine bridges form between Cys-71-Cys-176 and Cys-141-Cys-195. The GPI-anchor amidated serine moiety is linked to residue Ser-214. The propeptide at 215 to 239 is removed in mature form; the sequence is AAAPKSSLMSVLPVYMVALLSWAMM.

It belongs to the X325 family. The cofactor is Cu(2+).

Its subcellular location is the cell membrane. Lytic polysaccharide monooxygenase-like protein that has diverged to biological functions other than polysaccharide degradation since it does not perform oxidative cleavage of polysaccharides. Acts as a cell surface-bound protein that functions in the copper-accumulation pathway. May also act as the major cell wall sensor that regulates MAP kinase-dependent hyphal anastomosis, the fusion of hyphal cells. This chain is Lytic polysaccharide monooxygenase-like protein X325, found in Aspergillus fumigatus (strain ATCC MYA-4609 / CBS 101355 / FGSC A1100 / Af293) (Neosartorya fumigata).